The chain runs to 157 residues: 2-C-methyl-D-erythritol 2,4-cyclodiphosphate synthase (157 aa).

A divalent metal cation-binding residues include Asp-8 and His-10. 4-CDP-2-C-methyl-D-erythritol 2-phosphate contacts are provided by residues 8-10 (DVH) and 34-35 (HS). An a divalent metal cation-binding site is contributed by His-42. 4-CDP-2-C-methyl-D-erythritol 2-phosphate-binding positions include 56 to 58 (DIG), 132 to 135 (TTNE), and Arg-142.

The protein belongs to the IspF family. As to quaternary structure, homotrimer. Requires a divalent metal cation as cofactor.

It carries out the reaction 4-CDP-2-C-methyl-D-erythritol 2-phosphate = 2-C-methyl-D-erythritol 2,4-cyclic diphosphate + CMP. It participates in isoprenoid biosynthesis; isopentenyl diphosphate biosynthesis via DXP pathway; isopentenyl diphosphate from 1-deoxy-D-xylulose 5-phosphate: step 4/6. Involved in the biosynthesis of isopentenyl diphosphate (IPP) and dimethylallyl diphosphate (DMAPP), two major building blocks of isoprenoid compounds. Catalyzes the conversion of 4-diphosphocytidyl-2-C-methyl-D-erythritol 2-phosphate (CDP-ME2P) to 2-C-methyl-D-erythritol 2,4-cyclodiphosphate (ME-CPP) with a corresponding release of cytidine 5-monophosphate (CMP). This Prosthecochloris aestuarii (strain DSM 271 / SK 413) protein is 2-C-methyl-D-erythritol 2,4-cyclodiphosphate synthase.